Consider the following 399-residue polypeptide: MRGTIYVAIAILVAASSRSSAESDQVEPQQAPNSDFVTSDDTIYEVLPTRILRESRGSNDKLAVGAGDEERMMNNLSNGNSLSESLEQTTIKLTTDDVIAKAEEAIKNFKQLEPVLNMIRRKRQRIDPTPSNLGGQALHAPPNPDKSLVSVTENAPNVIANRLEKSGPTVIMKNAVRSITQHDYRPAPSGSSTTSAAATDIRLHEQPIARKGSELFKNIYPNKMVSNSVEHPLHMLEGNENSAHTVTVNGITYLMAQGPALGRKDTVNEEAKKIHEAFLKAFSLPFHQYPEETTHMLRLLRWSYNSSPNNINTATSLKDLANSQDPDVIMNLLDMDLKKLLGDGRSAVKATEKNLKEAYSVKLLIMYELFYDFCHGNRKLVGNLPSKSDRVDSILKVTT.

The N-terminal stretch at 1 to 21 is a signal peptide; the sequence is MRGTIYVAIAILVAASSRSSA. The RxLR-dEER motif lies at 50-71; it reads RILRESRGSNDKLAVGAGDEER. N-linked (GlcNAc...) asparagine glycosylation occurs at N75. Residues 126 to 145 form a disordered region; that stretch reads IDPTPSNLGGQALHAPPNPD.

The protein belongs to the RxLR effector family.

It is found in the secreted. It localises to the host nucleus. Secreted effector that completely suppresses the host cell death induced by cell death-inducing proteins. The sequence is that of Secreted RxLR effector protein 36 from Plasmopara viticola (Downy mildew of grapevine).